A 621-amino-acid chain; its full sequence is Cryptochrome-1 (621 aa).

The Photolyase/cryptochrome alpha/beta domain maps to 3–132 (VNAVHWFRKG…EVIVRISHTL (130 aa)). Short sequence motifs (LIR) lie at residues 50 to 54 (NRWRF), 82 to 87 (DVFPRL), and 151 to 156 (KRFQTL). Position 252 (S252) interacts with FAD. Short sequence motifs (LIR) lie at residues 255-260 (LRFGCL), 271-276 (DLYKKV), 285-290 (SLYGQL), and 335-339 (TGFPW). Q289 lines the FAD pocket. Residue H355 coordinates FAD. The LIR 8 signature appears at 379–384 (KVFEEL). Position 387–389 (387–389 (DAD)) interacts with FAD. 5 short sequence motifs (LIR) span residues 395–400 (GSWMWL), 411–416 (HCYCPV), 430–435 (RRYLPV), 486–491 (QIYQQL), and 492–497 (SRYRGL). Residues 581–621 (QSHLMQPGRASLGTGISAGKRPNPEEETQSVGPKVQRQSTN) form a disordered region.

Belongs to the DNA photolyase class-1 family. As to quaternary structure, component of the circadian core oscillator, which includes the CRY proteins, CLOCK or NPAS2, BMAL1 or BMAL2, CSNK1E, and the PER proteins. It depends on FAD as a cofactor. (6R)-5,10-methylene-5,6,7,8-tetrahydrofolate is required as a cofactor. In terms of tissue distribution, expressed in the pineal gland.

It localises to the cytoplasm. It is found in the nucleus. Its function is as follows. Transcriptional repressor which forms a core component of the circadian clock. The circadian clock, an internal time-keeping system, regulates various physiological processes through the generation of approximately 24 hour circadian rhythms in gene expression, which are translated into rhythms in metabolism and behavior. It is derived from the Latin roots 'circa' (about) and 'diem' (day) and acts as an important regulator of a wide array of physiological functions including metabolism, sleep, body temperature, blood pressure, endocrine, immune, cardiovascular, and renal function. Consists of two major components: the central clock, residing in the suprachiasmatic nucleus (SCN) of the brain, and the peripheral clocks that are present in nearly every tissue and organ system. Both the central and peripheral clocks can be reset by environmental cues, also known as Zeitgebers (German for 'timegivers'). The predominant Zeitgeber for the central clock is light, which is sensed by retina and signals directly to the SCN. The central clock entrains the peripheral clocks through neuronal and hormonal signals, body temperature and feeding-related cues, aligning all clocks with the external light/dark cycle. Circadian rhythms allow an organism to achieve temporal homeostasis with its environment at the molecular level by regulating gene expression to create a peak of protein expression once every 24 hours to control when a particular physiological process is most active with respect to the solar day. Transcription and translation of core clock components (CLOCK, NPAS2, BMAL1, BMAL2, PER1, PER2, PER3, CRY1 and CRY2) plays a critical role in rhythm generation, whereas delays imposed by post-translational modifications (PTMs) are important for determining the period (tau) of the rhythms (tau refers to the period of a rhythm and is the length, in time, of one complete cycle). A diurnal rhythm is synchronized with the day/night cycle, while the ultradian and infradian rhythms have a period shorter and longer than 24 hours, respectively. Disruptions in the circadian rhythms contribute to the pathology of cardiovascular diseases, cancer, metabolic syndromes and aging. A transcription/translation feedback loop (TTFL) forms the core of the molecular circadian clock mechanism. Transcription factors, CLOCK or NPAS2 and BMAL1 or BMAL2, form the positive limb of the feedback loop, act in the form of a heterodimer and activate the transcription of core clock genes and clock-controlled genes (involved in key metabolic processes), harboring E-box elements (5'-CACGTG-3') within their promoters. The core clock genes: PER1/2/3 and CRY1/2 which are transcriptional repressors form the negative limb of the feedback loop and interact with the CLOCK|NPAS2-BMAL1|BMAL2 heterodimer inhibiting its activity and thereby negatively regulating their own expression. This heterodimer also activates nuclear receptors NR1D1/2 and RORA/B/G, which form a second feedback loop and which activate and repress BMAL1 transcription, respectively. CRY1 and CRY2 have redundant functions but also differential and selective contributions at least in defining the pace of the SCN circadian clock and its circadian transcriptional outputs. More potent transcriptional repressor in cerebellum and liver than CRY2, though more effective in lengthening the period of the SCN oscillator. On its side, CRY2 seems to play a critical role in tuning SCN circadian period by opposing the action of CRY1. With CRY2, is dispensable for circadian rhythm generation but necessary for the development of intercellular networks for rhythm synchrony. Capable of translocating circadian clock core proteins such as PER proteins to the nucleus. Interacts with CLOCK-BMAL1 independently of PER proteins and is found at CLOCK-BMAL1-bound sites, suggesting that CRY may act as a molecular gatekeeper to maintain CLOCK-BMAL1 in a poised and repressed state until the proper time for transcriptional activation. Represses CLOCK-BMAL1-mediated transcriptional activation. The polypeptide is Cryptochrome-1 (CRY1) (Gallus gallus (Chicken)).